A 323-amino-acid polypeptide reads, in one-letter code: tRNA U34 carboxymethyltransferase (323 aa).

Carboxy-S-adenosyl-L-methionine-binding positions include Lys91, Trp105, Lys110, Gly130, 152–154 (DPT), 181–182 (IE), Met196, Tyr200, and Arg315.

Belongs to the class I-like SAM-binding methyltransferase superfamily. CmoB family. Homotetramer.

It catalyses the reaction carboxy-S-adenosyl-L-methionine + 5-hydroxyuridine(34) in tRNA = 5-carboxymethoxyuridine(34) in tRNA + S-adenosyl-L-homocysteine + H(+). Functionally, catalyzes carboxymethyl transfer from carboxy-S-adenosyl-L-methionine (Cx-SAM) to 5-hydroxyuridine (ho5U) to form 5-carboxymethoxyuridine (cmo5U) at position 34 in tRNAs. This is tRNA U34 carboxymethyltransferase from Shigella dysenteriae serotype 1 (strain Sd197).